Here is a 123-residue protein sequence, read N- to C-terminus: Protein Wnt-3a (123 aa).

Residue Ser1 is the site of O-palmitoleoyl serine attachment. Cys89 and Cys104 form a disulfide bridge. Residue Asn90 is glycosylated (N-linked (GlcNAc...) asparagine).

This sequence belongs to the Wnt family. Post-translationally, disulfide bonds have critical and distinct roles in secretion and activity. Loss of each conserved cysteine results in high molecular weight oxidized Wnt oligomers, which are formed through inter-Wnt disulfide bonding. Palmitoleoylation is required for efficient binding to frizzled receptors. Depalmitoleoylation leads to Wnt signaling pathway inhibition.

It localises to the secreted. The protein resides in the extracellular space. It is found in the extracellular matrix. Functionally, ligand for members of the frizzled family of seven transmembrane receptors. Functions in the canonical Wnt signaling pathway that results in activation of transcription factors of the TCF/LEF family. Required for normal embryonic mesoderm development and formation of caudal somites. Required for normal morphogenesis of the developing neural tube. The protein is Protein Wnt-3a (WNT-3A) of Alopias vulpinus (Common thresher shark).